The primary structure comprises 303 residues: Glycine betaine/carnitine/choline-binding protein OpuCC (303 aa).

A signal peptide spans 1 to 20 (MTKIKWLGAFALVFVMLLGG). Cysteine 21 carries N-palmitoyl cysteine lipidation. Cysteine 21 carries the S-diacylglycerol cysteine lipid modification.

The protein belongs to the OsmX family. The complex is composed of two ATP-binding proteins (OpuCA), two transmembrane proteins (OpuCB and OpuCD) and a solute-binding protein (OpuCC).

The protein resides in the cell membrane. Functionally, member of a high affinity multicomponent binding-protein-dependent transport system for glycine betaine, carnitine, and choline. The sequence is that of Glycine betaine/carnitine/choline-binding protein OpuCC (opuCC) from Bacillus subtilis (strain 168).